Here is a 312-residue protein sequence, read N- to C-terminus: Protease HtpX homolog (312 aa).

2 helical membrane-spanning segments follow: residues 6–26 and 28–48; these read TAVL…AIGG and GGMM…YWYA. His130 is a binding site for Zn(2+). The active site involves Glu131. His134 lines the Zn(2+) pocket. Helical transmembrane passes span 145–165 and 173–193; these read ITAS…FFGG and PFGG…AMVV. Residue Glu202 coordinates Zn(2+). Over residues 287–297 the composition is skewed to low complexity; that stretch reads PAPARAAPARG. The segment at 287–312 is disordered; that stretch reads PAPARAAPARGPWGGNTGGTRRGPWG. The span at 298 to 312 shows a compositional bias: gly residues; that stretch reads PWGGNTGGTRRGPWG.

It belongs to the peptidase M48B family. It depends on Zn(2+) as a cofactor.

The protein resides in the cell inner membrane. In Azorhizobium caulinodans (strain ATCC 43989 / DSM 5975 / JCM 20966 / LMG 6465 / NBRC 14845 / NCIMB 13405 / ORS 571), this protein is Protease HtpX homolog.